The primary structure comprises 420 residues: DNA primase small subunit (420 aa).

At methionine 1 the chain carries N-acetylmethionine. Residues glutamate 44, aspartate 109, and aspartate 111 contribute to the active site. The Mg(2+) site is built by aspartate 109 and aspartate 111. Mn(2+) contacts are provided by aspartate 109 and aspartate 111. Residue aspartate 109–aspartate 111 coordinates a ribonucleoside 5'-triphosphate. Residues cysteine 121, cysteine 122, cysteine 128, and cysteine 131 each coordinate Zn(2+). The short motif at cysteine 121–cysteine 131 is the Zinc knuckle motif element. A ribonucleoside 5'-triphosphate is bound at residue serine 160–histidine 166. Aspartate 306 serves as a coordination point for Mg(2+). Aspartate 306 contacts Mn(2+). Residues histidine 315–lysine 318 and histidine 324 each bind a ribonucleoside 5'-triphosphate. Over residues asparagine 363 to glutamate 373 the composition is skewed to acidic residues. Residues asparagine 363–aspartate 382 form a disordered region.

The protein belongs to the eukaryotic-type primase small subunit family. Heterodimer of a catalytic subunit PRIM1 and a regulatory subunit PRIM2, also known as the DNA primase complex. Interacts with PRIM2 (via C-terminus). Component of the alpha DNA polymerase complex (also known as the alpha DNA polymerase-primase complex) consisting of four subunits: the catalytic subunit POLA1, the regulatory subunit POLA2, and the primase complex subunits PRIM1 and PRIM2 respectively. Within the complex, POLA1 directly interacts with PRIM2. Mg(2+) serves as cofactor. It depends on Mn(2+) as a cofactor.

It catalyses the reaction ssDNA + n NTP = ssDNA/pppN(pN)n-1 hybrid + (n-1) diphosphate.. Its activity is regulated as follows. The presence of the regulatory subunit PRIM2/p58 accelerates the kinetics of initiation and primer extension. Inhibited by arabinose nucleoside derivatives such as fludarabine and vidarabine. Functionally, catalytic subunit of the DNA primase complex and component of the DNA polymerase alpha complex (also known as the alpha DNA polymerase-primase complex - primosome/replisome) which play an essential role in the initiation of DNA synthesis. During the S phase of the cell cycle, the DNA polymerase alpha complex (composed of a catalytic subunit POLA1, an accessory subunit POLA2 and two primase subunits, the catalytic subunit PRIM1 and the regulatory subunit PRIM2) is recruited to DNA at the replicative forks via direct interactions with MCM10 and WDHD1. The primase subunit of the polymerase alpha complex initiates DNA synthesis by oligomerising short RNA primers on both leading and lagging strands. These primers are initially extended by the polymerase alpha catalytic subunit and subsequently transferred to polymerase delta and polymerase epsilon for processive synthesis on the lagging and leading strand, respectively. In the primase complex, both subunits are necessary for the initial di-nucleotide formation, but the extension of the primer depends only on the catalytic subunit. Synthesizes 9-mer RNA primers (also known as the 'unit length' RNA primers). Incorporates only ribonucleotides in the presence of ribo- and deoxy-nucleotide triphosphates (rNTPs, dNTPs). Requires template thymine or cytidine to start the RNA primer synthesis, with an adenine or guanine at its 5'-end. Binds single stranded DNA. The chain is DNA primase small subunit (PRIM1) from Homo sapiens (Human).